The following is a 122-amino-acid chain: Large ribosomal subunit protein uL14 (122 aa).

It belongs to the universal ribosomal protein uL14 family. In terms of assembly, part of the 50S ribosomal subunit. Forms a cluster with proteins L3 and L19. In the 70S ribosome, L14 and L19 interact and together make contacts with the 16S rRNA in bridges B5 and B8.

Functionally, binds to 23S rRNA. Forms part of two intersubunit bridges in the 70S ribosome. In Streptococcus pyogenes serotype M2 (strain MGAS10270), this protein is Large ribosomal subunit protein uL14.